A 512-amino-acid polypeptide reads, in one-letter code: Kynurenine 3-monooxygenase (512 aa).

This sequence belongs to the aromatic-ring hydroxylase family. KMO subfamily. The cofactor is FAD.

The protein resides in the mitochondrion outer membrane. The enzyme catalyses L-kynurenine + NADPH + O2 + H(+) = 3-hydroxy-L-kynurenine + NADP(+) + H2O. It participates in cofactor biosynthesis; NAD(+) biosynthesis; quinolinate from L-kynurenine: step 1/3. Functionally, catalyzes the hydroxylation of L-kynurenine (L-Kyn) to form 3-hydroxy-L-kynurenine (L-3OHKyn). Required for synthesis of quinolinic acid. The protein is Kynurenine 3-monooxygenase (bna4) of Aspergillus clavatus (strain ATCC 1007 / CBS 513.65 / DSM 816 / NCTC 3887 / NRRL 1 / QM 1276 / 107).